Consider the following 79-residue polypeptide: Acyl carrier protein (79 aa).

Residues 4-79 enclose the Carrier domain; that stretch reads AEIKDKVYDI…QAIDYIVNKK (76 aa). Ser39 carries the post-translational modification O-(pantetheine 4'-phosphoryl)serine.

Belongs to the acyl carrier protein (ACP) family. 4'-phosphopantetheine is transferred from CoA to a specific serine of apo-ACP by AcpS. This modification is essential for activity because fatty acids are bound in thioester linkage to the sulfhydryl of the prosthetic group.

It localises to the cytoplasm. It functions in the pathway lipid metabolism; fatty acid biosynthesis. Its function is as follows. Carrier of the growing fatty acid chain in fatty acid biosynthesis. The polypeptide is Acyl carrier protein (Chlorobaculum parvum (strain DSM 263 / NCIMB 8327) (Chlorobium vibrioforme subsp. thiosulfatophilum)).